The primary structure comprises 663 residues: MAU2 chromatid cohesion factor homolog (663 aa).

TPR repeat units follow at residues Gly-455–Glu-488 and Ser-495–Ile-528.

This sequence belongs to the SCC4/mau-2 family. In terms of assembly, interacts with Nipped-B to form the cohesin loading complex.

Its subcellular location is the nucleus. The protein resides in the nucleoplasm. Required for association of the cohesin complex with chromatin during interphase. Plays a role in sister chromatid cohesion and normal progression through prometaphase. The sequence is that of MAU2 chromatid cohesion factor homolog from Drosophila willistoni (Fruit fly).